Here is a 609-residue protein sequence, read N- to C-terminus: UvrABC system protein C (609 aa).

Residues 13 to 91 enclose the GIY-YIG domain; that stretch reads HEPGVYRMYD…IKLYQPRYNV (79 aa). The 36-residue stretch at 201–236 folds into the UVR domain; sequence QQVLDYLIGKMEQASRNLDFEQAARYRDQIQAVRSV.

Belongs to the UvrC family. Interacts with UvrB in an incision complex.

It is found in the cytoplasm. In terms of biological role, the UvrABC repair system catalyzes the recognition and processing of DNA lesions. UvrC both incises the 5' and 3' sides of the lesion. The N-terminal half is responsible for the 3' incision and the C-terminal half is responsible for the 5' incision. The sequence is that of UvrABC system protein C from Haemophilus influenzae (strain ATCC 51907 / DSM 11121 / KW20 / Rd).